Reading from the N-terminus, the 310-residue chain is NADP-dependent D-sorbitol-6-phosphate dehydrogenase (310 aa).

Tyr-48 acts as the Proton donor in catalysis. His-108 contacts substrate. NADP(+) is bound at residue 210–272 (TPLGGAAANK…SSKIQRLKEN (63 aa)).

The protein belongs to the aldo/keto reductase family.

The enzyme catalyses D-sorbitol 6-phosphate + NADP(+) = aldehydo-D-glucose 6-phosphate + NADPH + H(+). In terms of biological role, synthesizes sorbitol-6-phosphate, a key intermediate in the synthesis of sorbitol which is a major photosynthetic product in many members of the Rosaceae family. The chain is NADP-dependent D-sorbitol-6-phosphate dehydrogenase (S6PDH) from Malus domestica (Apple).